The chain runs to 166 residues: CDP-archaeol synthase (166 aa).

The next 4 helical transmembrane spans lie at 42–62 (LVLG…VQDA), 73–93 (VLSV…KSFV), 103–123 (AAWP…LLLI), and 128–148 (FAAV…TPLL).

This sequence belongs to the CDP-archaeol synthase family. The cofactor is Mg(2+).

It localises to the cell membrane. The catalysed reaction is 2,3-bis-O-(geranylgeranyl)-sn-glycerol 1-phosphate + CTP + H(+) = CDP-2,3-bis-O-(geranylgeranyl)-sn-glycerol + diphosphate. It functions in the pathway membrane lipid metabolism; glycerophospholipid metabolism. Its function is as follows. Catalyzes the formation of CDP-2,3-bis-(O-geranylgeranyl)-sn-glycerol (CDP-archaeol) from 2,3-bis-(O-geranylgeranyl)-sn-glycerol 1-phosphate (DGGGP) and CTP. This reaction is the third ether-bond-formation step in the biosynthesis of archaeal membrane lipids. The protein is CDP-archaeol synthase of Methanosphaerula palustris (strain ATCC BAA-1556 / DSM 19958 / E1-9c).